The primary structure comprises 687 residues: MMTQTLLIELLTEELPPKALNNLGNHFAAAVAEGLEKAQLVDGAAEYTAYASPRRLAVQVKNVKAVQADQKIVKKGPAVANAVKDGAPTKALEGFARGAGAKIEDLTIVHDGKQDVYAYEYVQTGKLLGELLEDIINAAVKKLPIPKVMRWGSSTFTFVRPVHGLIVLHGGDIVNVSVLGLQSGNKTLGHRFLSDGEITIENADSYAEQMREQGKVVASFAERKAAIQTALEGQARRLNAAVAADEALLDEVTALVEWPVVLEAGFEEHFLAVPQECLILTMQQNQKYFPLLDQNGKLMNRFLLVSNLQTEDPSHIIQGNERVLRARLSDAEFFYKQDQKATLESRLPKLSGVVYHNKIGSQAERIERLQSIAAHIAKALGADAAAAERAARLAKADLVTEMVGEFPELQGTMGKYYARLDGETEEIAEAVEQHYQPRFAGDKLPESKIATAVALADKLETLVGIWGIGLIPTSDKDPYALRRSALGILRMLMQYGLDVNELIQTAFDSFPKGLLNEKTPSETADFMQARLAVLLQNDYPQDIVAAVLAKQPRRLDDVVAKLQAVASFKQLPEAAALAAANKRVQNLLKKADAELGVVNESLLQQDEEKALFAAAQGLQPKIAAAVAEGNFQTALSELASVKPQVDAFFDGVMVMAEDAAVKQNRLNLLNRLAEQMNAVADIALLGE.

Belongs to the class-II aminoacyl-tRNA synthetase family. As to quaternary structure, tetramer of two alpha and two beta subunits.

The protein localises to the cytoplasm. It catalyses the reaction tRNA(Gly) + glycine + ATP = glycyl-tRNA(Gly) + AMP + diphosphate. This Neisseria meningitidis serogroup A / serotype 4A (strain DSM 15465 / Z2491) protein is Glycine--tRNA ligase beta subunit.